The chain runs to 254 residues: Ribosomal RNA small subunit methyltransferase J (254 aa).

S-adenosyl-L-methionine-binding positions include 107 to 108 (RD), 123 to 124 (ER), and Asp174.

It belongs to the methyltransferase superfamily. RsmJ family.

Its subcellular location is the cytoplasm. It carries out the reaction guanosine(1516) in 16S rRNA + S-adenosyl-L-methionine = N(2)-methylguanosine(1516) in 16S rRNA + S-adenosyl-L-homocysteine + H(+). Its function is as follows. Specifically methylates the guanosine in position 1516 of 16S rRNA. This chain is Ribosomal RNA small subunit methyltransferase J, found in Coxiella burnetii (strain Dugway 5J108-111).